The following is a 212-amino-acid chain: Thiamine-phosphate synthase (212 aa).

Residues glutamine 40–lysine 44 and asparagine 75 each bind 4-amino-2-methyl-5-(diphosphooxymethyl)pyrimidine. 2 residues coordinate Mg(2+): aspartate 76 and aspartate 95. Residue serine 113 coordinates 4-amino-2-methyl-5-(diphosphooxymethyl)pyrimidine. Threonine 139–serine 141 provides a ligand contact to 2-[(2R,5Z)-2-carboxy-4-methylthiazol-5(2H)-ylidene]ethyl phosphate. Lysine 142 is a 4-amino-2-methyl-5-(diphosphooxymethyl)pyrimidine binding site. 2-[(2R,5Z)-2-carboxy-4-methylthiazol-5(2H)-ylidene]ethyl phosphate-binding positions include glycine 171 and isoleucine 191–serine 192.

It belongs to the thiamine-phosphate synthase family. The cofactor is Mg(2+).

It carries out the reaction 2-[(2R,5Z)-2-carboxy-4-methylthiazol-5(2H)-ylidene]ethyl phosphate + 4-amino-2-methyl-5-(diphosphooxymethyl)pyrimidine + 2 H(+) = thiamine phosphate + CO2 + diphosphate. The catalysed reaction is 2-(2-carboxy-4-methylthiazol-5-yl)ethyl phosphate + 4-amino-2-methyl-5-(diphosphooxymethyl)pyrimidine + 2 H(+) = thiamine phosphate + CO2 + diphosphate. The enzyme catalyses 4-methyl-5-(2-phosphooxyethyl)-thiazole + 4-amino-2-methyl-5-(diphosphooxymethyl)pyrimidine + H(+) = thiamine phosphate + diphosphate. The protein operates within cofactor biosynthesis; thiamine diphosphate biosynthesis; thiamine phosphate from 4-amino-2-methyl-5-diphosphomethylpyrimidine and 4-methyl-5-(2-phosphoethyl)-thiazole: step 1/1. Its function is as follows. Condenses 4-methyl-5-(beta-hydroxyethyl)thiazole monophosphate (THZ-P) and 2-methyl-4-amino-5-hydroxymethyl pyrimidine pyrophosphate (HMP-PP) to form thiamine monophosphate (TMP). The sequence is that of Thiamine-phosphate synthase from Staphylococcus carnosus (strain TM300).